Reading from the N-terminus, the 867-residue chain is DNA endonuclease RBBP8 (867 aa).

Positions 25–48 (ELWSKLKECHDKELQELLLKINKL) are essential for binding to the MRN complex and for RPA focus formation on DNA damage. Coiled coils occupy residues 38–87 (LQEL…EDRL) and 120–141 (ITEL…SEQL). Disordered stretches follow at residues 141 to 171 (LHNM…PDSP) and 448 to 486 (RYGK…HSML). The span at 154–166 (ENPADTGEGEDGV) shows a compositional bias: acidic residues. The short motif at 489 to 493 (PLDLS) is the PXDLS motif element. Positions 508 to 531 (SSRGRTKQTFALVPEKPDPKKPLH) are damage-recruitment motif. A phosphothreonine mark is found at threonine 817 and threonine 829. A disordered region spans residues 843–867 (SPCQRPRRRQPYNAKFSSKIKEQKT).

It belongs to the COM1/SAE2/CtIP family. Homotetramer; formed by antiparallel association of helical extensions protruding from the N-termini of two parallel coiled-coil dimers. Interacts with the MRN complex; the interaction links DNA sensing to resection. Interacts with samhd1. In terms of processing, phosphorylation at Thr-817 and Thr-829 promote interaction with nbn and recruitment to double-strand breaks (DSBs).

It localises to the nucleus. The protein resides in the chromosome. Endonuclease that cooperates with the MRE11-RAD50-NBN (MRN) complex in DNA-end resection, the first step of double-strand break (DSB) repair through the homologous recombination (HR) pathway. Functions downstream of the MRN complex and ATM, promotes ATR activation and its recruitment to DSBs in the S/G2 phase facilitating the generation of ssDNA. Specifically promotes the endonuclease activity of the MRN complex to clear DNA ends containing protein adducts: recruited to DSBs by nbn following phosphorylation, and promotes the endonuclease of mre11 to clear protein-DNA adducts and generate clean double-strand break ends. This is DNA endonuclease RBBP8 (rbbp8) from Xenopus tropicalis (Western clawed frog).